The sequence spans 397 residues: Phosphoglycerate kinase (397 aa).

Substrate-binding positions include 25–27 (DLN), Arg41, 64–67 (HLGR), Arg118, and Arg151. ATP contacts are provided by residues Lys202, Glu324, and 350-353 (GGDT).

It belongs to the phosphoglycerate kinase family. In terms of assembly, monomer.

The protein localises to the cytoplasm. The enzyme catalyses (2R)-3-phosphoglycerate + ATP = (2R)-3-phospho-glyceroyl phosphate + ADP. It functions in the pathway carbohydrate degradation; glycolysis; pyruvate from D-glyceraldehyde 3-phosphate: step 2/5. This Janthinobacterium sp. (strain Marseille) (Minibacterium massiliensis) protein is Phosphoglycerate kinase.